The primary structure comprises 612 residues: Dihydroxy-acid dehydratase (612 aa).

Mg(2+) is bound at residue Asp81. Cys122 contacts [2Fe-2S] cluster. The Mg(2+) site is built by Asp123 and Lys124. Lys124 carries the N6-carboxylysine modification. Residue Cys195 coordinates [2Fe-2S] cluster. Glu491 is a Mg(2+) binding site. Ser517 (proton acceptor) is an active-site residue.

Belongs to the IlvD/Edd family. Homodimer. [2Fe-2S] cluster is required as a cofactor. Mg(2+) serves as cofactor.

It catalyses the reaction (2R)-2,3-dihydroxy-3-methylbutanoate = 3-methyl-2-oxobutanoate + H2O. The catalysed reaction is (2R,3R)-2,3-dihydroxy-3-methylpentanoate = (S)-3-methyl-2-oxopentanoate + H2O. It functions in the pathway amino-acid biosynthesis; L-isoleucine biosynthesis; L-isoleucine from 2-oxobutanoate: step 3/4. The protein operates within amino-acid biosynthesis; L-valine biosynthesis; L-valine from pyruvate: step 3/4. Functions in the biosynthesis of branched-chain amino acids. Catalyzes the dehydration of (2R,3R)-2,3-dihydroxy-3-methylpentanoate (2,3-dihydroxy-3-methylvalerate) into 2-oxo-3-methylpentanoate (2-oxo-3-methylvalerate) and of (2R)-2,3-dihydroxy-3-methylbutanoate (2,3-dihydroxyisovalerate) into 2-oxo-3-methylbutanoate (2-oxoisovalerate), the penultimate precursor to L-isoleucine and L-valine, respectively. The sequence is that of Dihydroxy-acid dehydratase from Rhizobium johnstonii (strain DSM 114642 / LMG 32736 / 3841) (Rhizobium leguminosarum bv. viciae).